Reading from the N-terminus, the 92-residue chain is MTRSLKKNPFVANNFLGKIEKLNMREEKEIIITWSRASTIIPTMIGHTIAIHNGKDHLPIYITDRMVGHKLGEFAPTLTFKGHARNDNRSRR.

The protein belongs to the universal ribosomal protein uS19 family.

It localises to the plastid. The protein resides in the chloroplast. Its function is as follows. Protein S19 forms a complex with S13 that binds strongly to the 16S ribosomal RNA. This is Small ribosomal subunit protein uS19c from Liriodendron tulipifera (Tuliptree).